The sequence spans 186 residues: Ribosome-recycling factor (186 aa).

Belongs to the RRF family.

It localises to the cytoplasm. In terms of biological role, responsible for the release of ribosomes from messenger RNA at the termination of protein biosynthesis. May increase the efficiency of translation by recycling ribosomes from one round of translation to another. In Rickettsia rickettsii (strain Iowa), this protein is Ribosome-recycling factor.